The sequence spans 193 residues: Potassium-transporting ATPase KdpC subunit (193 aa).

A helical transmembrane segment spans residues 7 to 27 (PLVVLFVVLNAVTGLAYPAVM).

This sequence belongs to the KdpC family. The system is composed of three essential subunits: KdpA, KdpB and KdpC.

It is found in the cell inner membrane. In terms of biological role, part of the high-affinity ATP-driven potassium transport (or Kdp) system, which catalyzes the hydrolysis of ATP coupled with the electrogenic transport of potassium into the cytoplasm. This subunit acts as a catalytic chaperone that increases the ATP-binding affinity of the ATP-hydrolyzing subunit KdpB by the formation of a transient KdpB/KdpC/ATP ternary complex. This Burkholderia cenocepacia (strain HI2424) protein is Potassium-transporting ATPase KdpC subunit.